Reading from the N-terminus, the 491-residue chain is AP-2 complex subunit mu (491 aa).

A phosphoserine mark is found at serine 179, serine 180, and serine 181. The 282-residue stretch at 209–490 folds into the MHD domain; it reads KDEVFLYVNE…ISKAGSYEVR (282 aa).

It belongs to the adaptor complexes medium subunit family. Adaptor protein complex 2 (AP-2) is a heterotetramer composed of two large adaptins (alpha-type subunit APL3 and beta-type subunit APL1), a medium chain (mu-type subunit APM4) and a small adaptin (sigma-type subunit APS2).

The protein resides in the membrane. The protein localises to the clathrin-coated pit. It is found in the cytoplasmic vesicle. It localises to the clathrin-coated vesicle membrane. Its function is as follows. Component of the adaptor complexes which link clathrin to receptors in coated vesicles. Clathrin-associated protein complexes are believed to interact with the cytoplasmic tails of membrane proteins, leading to their selection and concentration. The chain is AP-2 complex subunit mu (APM4) from Saccharomyces cerevisiae (strain ATCC 204508 / S288c) (Baker's yeast).